A 260-amino-acid chain; its full sequence is Methylthioribulose-1-phosphate dehydratase (260 aa).

A disordered region spans residues 1 to 26 (MTPPTTGLPAENTTDDNDHLVQSDDP). Residues 16-26 (DNDHLVQSDDP) are compositionally biased toward basic and acidic residues. C109 is a substrate binding site. Zn(2+) contacts are provided by H127 and H129. Residue E154 is the Proton donor/acceptor of the active site. H211 provides a ligand contact to Zn(2+).

This sequence belongs to the aldolase class II family. MtnB subfamily. Zn(2+) serves as cofactor.

It is found in the cytoplasm. The catalysed reaction is 5-(methylsulfanyl)-D-ribulose 1-phosphate = 5-methylsulfanyl-2,3-dioxopentyl phosphate + H2O. It participates in amino-acid biosynthesis; L-methionine biosynthesis via salvage pathway; L-methionine from S-methyl-5-thio-alpha-D-ribose 1-phosphate: step 2/6. Catalyzes the dehydration of methylthioribulose-1-phosphate (MTRu-1-P) into 2,3-diketo-5-methylthiopentyl-1-phosphate (DK-MTP-1-P). The sequence is that of Methylthioribulose-1-phosphate dehydratase from Podospora anserina (strain S / ATCC MYA-4624 / DSM 980 / FGSC 10383) (Pleurage anserina).